We begin with the raw amino-acid sequence, 354 residues long: F-box/kelch-repeat protein At1g80440 (354 aa).

Positions 2-49 (ELIPNLPDDVARECLLRSSYQQFPVIASVCRAWNREVSLSQFLHQRKA) constitute an F-box domain. Kelch repeat units lie at residues 63 to 110 (RVDP…CRLV), 115 to 163 (DLIV…ASDS), 166 to 213 (TVLV…FHAG), and 215 to 263 (FHVI…PPTC).

In Arabidopsis thaliana (Mouse-ear cress), this protein is F-box/kelch-repeat protein At1g80440.